Here is a 124-residue protein sequence, read N- to C-terminus: uncharacterized protein (124 aa).

The protein belongs to the YciI family.

This is an uncharacterized protein from Rhizobium meliloti (strain 1021) (Ensifer meliloti).